We begin with the raw amino-acid sequence, 264 residues long: H-2 class II histocompatibility antigen, I-E beta chain (264 aa).

The first 31 residues, 1 to 31, serve as a signal peptide directing secretion; it reads MVWLPRVPCVAAVILLLTVLSPPVALVRNSR. The segment at 32–121 is beta-1; it reads PRFLEYSTSE…IFDNFLVPRR (90 aa). Residues 32 to 225 are Extracellular-facing; that stretch reads PRFLEYSTSE…KAQSTSAQNK (194 aa). 2 disulfide bridges follow: Cys-42/Cys-106 and Cys-144/Cys-200. N-linked (GlcNAc...) asparagine glycosylation occurs at Asn-46. A beta-2 region spans residues 122-215; sequence VEPTVTVYPT…SLTDPVTVEW (94 aa). In terms of domain architecture, Ig-like C1-type spans 124–214; it reads PTVTVYPTKT…PSLTDPVTVE (91 aa). A connecting peptide region spans residues 216–225; the sequence is KAQSTSAQNK. The helical transmembrane segment at 226–248 threads the bilayer; sequence MLSGVGGFVLGLLFLGAGLFIYF. Residues 249-264 are Cytoplasmic-facing; the sequence is RNQKGQSGLQPTGLLS.

The protein belongs to the MHC class II family. In terms of processing, ubiquitinated in immature dendritic cells leading to down-regulation of MHC class II.

The protein resides in the membrane. This Mus musculus (Mouse) protein is H-2 class II histocompatibility antigen, I-E beta chain (H2-Eb1).